Consider the following 60-residue polypeptide: uncharacterized protein (60 aa).

This is an uncharacterized protein from Homo sapiens (Human).